Here is a 248-residue protein sequence, read N- to C-terminus: NAD kinase (248 aa).

Catalysis depends on D45, which acts as the Proton acceptor. Residues 45–46 (DG), R50, 110–111 (NE), and D138 each bind NAD(+).

It belongs to the NAD kinase family. Requires a divalent metal cation as cofactor.

The protein localises to the cytoplasm. The enzyme catalyses NAD(+) + ATP = ADP + NADP(+) + H(+). Its function is as follows. Involved in the regulation of the intracellular balance of NAD and NADP, and is a key enzyme in the biosynthesis of NADP. Catalyzes specifically the phosphorylation on 2'-hydroxyl of the adenosine moiety of NAD to yield NADP. In Sulfurisphaera tokodaii (strain DSM 16993 / JCM 10545 / NBRC 100140 / 7) (Sulfolobus tokodaii), this protein is NAD kinase.